Consider the following 516-residue polypeptide: 4-hydroxybenzoate brominase (decarboxylating) (516 aa).

FAD is bound by residues serine 13, glutamate 32, valine 40, phenylalanine 41, histidine 51, valine 102, and glutamine 365.

It belongs to the FMO family. Requires FAD as cofactor.

The catalysed reaction is 2 bromide + 4-hydroxybenzoate + 2 NADPH + 2 O2 + 5 H(+) = 2,4-dibromophenol + CO2 + 2 NADP(+) + 4 H2O. It carries out the reaction bromide + 4-hydroxybenzoate + NADPH + O2 + 2 H(+) = 3-bromo-4-hydroxybenzoate + NADP(+) + 2 H2O. The enzyme catalyses 3-bromo-4-hydroxybenzoate + bromide + NADPH + O2 + 3 H(+) = 2,4-dibromophenol + CO2 + NADP(+) + 2 H2O. It catalyses the reaction 3,4-dihydroxybenzoate + 2 bromide + 2 NADPH + 2 O2 + 5 H(+) = 3,5-dibromobenzene-1,2-diol + CO2 + 2 NADP(+) + 4 H2O. The catalysed reaction is 3,4-dihydroxybenzoate + bromide + NADPH + O2 + 2 H(+) = 3-bromo-4,5-dihydroxybenzoate + NADP(+) + 2 H2O. It carries out the reaction 3-bromo-4,5-dihydroxybenzoate + bromide + NADPH + O2 + 3 H(+) = 3,5-dibromobenzene-1,2-diol + CO2 + NADP(+) + 2 H2O. In terms of biological role, brominase involved in the biosynthesis of polybrominated aromatic organic compounds. Catalyzes the bromination of 4-hydroxybenzoate (4-HBA) to 3-bromo-4-hydroxybenzoate, followed by bromination and decarboxylation of 3-bromo-4-hydroxybenzoate to 2,4-dibromophenol. Can also use 3,4-dihydroxybenzoate, with lower efficiency, forming 3-bromo-4,5-dihydroxybenzoate and 3,5-dibromobenzene-1,2-diol. This Marinomonas mediterranea (strain ATCC 700492 / JCM 21426 / NBRC 103028 / MMB-1) protein is 4-hydroxybenzoate brominase (decarboxylating).